The primary structure comprises 647 residues: tRNA 5-methylaminomethyl-2-thiouridine biosynthesis bifunctional protein MnmC (647 aa).

Positions 1-235 (MSIPPFSQAS…KRDMLCGRFT (235 aa)) are tRNA (mnm(5)s(2)U34)-methyltransferase. Positions 250 to 647 (IGGGIAGTAS…RGLACHPLRR (398 aa)) are FAD-dependent cmnm(5)s(2)U34 oxidoreductase.

It in the N-terminal section; belongs to the methyltransferase superfamily. tRNA (mnm(5)s(2)U34)-methyltransferase family. The protein in the C-terminal section; belongs to the DAO family. FAD is required as a cofactor.

It localises to the cytoplasm. The enzyme catalyses 5-aminomethyl-2-thiouridine(34) in tRNA + S-adenosyl-L-methionine = 5-methylaminomethyl-2-thiouridine(34) in tRNA + S-adenosyl-L-homocysteine + H(+). Functionally, catalyzes the last two steps in the biosynthesis of 5-methylaminomethyl-2-thiouridine (mnm(5)s(2)U) at the wobble position (U34) in tRNA. Catalyzes the FAD-dependent demodification of cmnm(5)s(2)U34 to nm(5)s(2)U34, followed by the transfer of a methyl group from S-adenosyl-L-methionine to nm(5)s(2)U34, to form mnm(5)s(2)U34. This chain is tRNA 5-methylaminomethyl-2-thiouridine biosynthesis bifunctional protein MnmC, found in Methylobacillus flagellatus (strain ATCC 51484 / DSM 6875 / VKM B-1610 / KT).